Consider the following 201-residue polypeptide: MNPGYDCLFKLLLIGDSGVGKSCLLLRFADDPYTESYISTIGVDFKIQTIELDGKTIKLQIWDTAGQERFWTITSSYYRGAHGFLVVYDVTDQESYANVKQWLQEIDRHASENVNKLLVGNKSDLTTKKVVDNTTAKEFADSLGIPFLETSAKNATNVEQAFMTMAAEIKKQMGPGAASGGERPNLKIDSTPVKPAGGGCC.

Residues 15 to 23 (GDSGVGKSC), 33 to 40 (YTESYIST), and 63 to 67 (DTAGQ) contribute to the GTP site. The short motif at 37 to 45 (YISTIGVDF) is the Effector region element. Residue Ser76 is modified to (Microbial infection) O-(2-cholinephosphoryl)serine. Residues 121-124 (NKSD) and 151-153 (SAK) each bind GTP. Residues 174 to 201 (GPGAASGGERPNLKIDSTPVKPAGGGCC) are disordered. 2 S-geranylgeranyl cysteine lipidation sites follow: Cys200 and Cys201.

The protein belongs to the small GTPase superfamily. Rab family. In terms of processing, (Microbial infection) Phosphocholinated at Ser-76 by L.pneumophila AnkX, leading to displace GDP dissociation inhibitors (GDI). Both GDP-bound and GTP-bound forms can be phosphocholinated. Dephosphocholinated by L.pneumophila Lem3, restoring accessibility to L.pneumophila GTPase effector LepB. Post-translationally, (Microbial infection) Glycosylated by S.typhimurium protein Ssek3: arginine GlcNAcylation prevents GTPase activity, thereby disrupting vesicular protein transport from the endoplasmic reticulum (ER) to the Golgi compartment.

It is found in the membrane. It localises to the cytoplasm. It catalyses the reaction GTP + H2O = GDP + phosphate + H(+). Its function is as follows. Protein transport. Probably involved in vesicular traffic. The chain is Putative Ras-related protein Rab-1C (RAB1C) from Homo sapiens (Human).